Consider the following 792-residue polypeptide: Coiled-coil domain-containing protein R3HCC1L (792 aa).

Residues 7-27 (RCRVRARRPDMALYVPKARRG) form an EJC-binding motif; may mediate interaction with the EJC region. Disordered regions lie at residues 32–61 (KTGD…QKEV) and 527–567 (EFKT…TSHT). Residue serine 688 is modified to Phosphoserine. Threonine 712 bears the Phosphothreonine mark. A coiled-coil region spans residues 751–783 (RSKQSKTEREAELKKLQEARERKRLEAKQREDI). A disordered region spans residues 772–792 (RKRLEAKQREDIWEGRDQSTV).

In terms of assembly, may interact with the exon junction complex (EJC) composed at least of CASC3, EIF4A3, MAGOH and RBM8A. Expressed in placenta.

This is Coiled-coil domain-containing protein R3HCC1L (R3HCC1L) from Homo sapiens (Human).